A 481-amino-acid chain; its full sequence is Proline--tRNA ligase (481 aa).

This sequence belongs to the class-II aminoacyl-tRNA synthetase family. ProS type 3 subfamily. As to quaternary structure, homodimer.

It is found in the cytoplasm. The catalysed reaction is tRNA(Pro) + L-proline + ATP = L-prolyl-tRNA(Pro) + AMP + diphosphate. Catalyzes the attachment of proline to tRNA(Pro) in a two-step reaction: proline is first activated by ATP to form Pro-AMP and then transferred to the acceptor end of tRNA(Pro). This chain is Proline--tRNA ligase, found in Thermococcus kodakarensis (strain ATCC BAA-918 / JCM 12380 / KOD1) (Pyrococcus kodakaraensis (strain KOD1)).